A 271-amino-acid polypeptide reads, in one-letter code: Glutamate racemase 3 (271 aa).

Substrate contacts are provided by residues 15-16 (DS) and 47-48 (YG). Catalysis depends on Cys78, which acts as the Proton donor/acceptor. A substrate-binding site is contributed by 79–80 (NT). Cys185 acts as the Proton donor/acceptor in catalysis. 186-187 (TH) lines the substrate pocket.

It belongs to the aspartate/glutamate racemases family.

It catalyses the reaction L-glutamate = D-glutamate. It participates in cell wall biogenesis; peptidoglycan biosynthesis. Functionally, provides the (R)-glutamate required for cell wall biosynthesis. In Caldanaerobacter subterraneus subsp. tengcongensis (strain DSM 15242 / JCM 11007 / NBRC 100824 / MB4) (Thermoanaerobacter tengcongensis), this protein is Glutamate racemase 3.